Reading from the N-terminus, the 785-residue chain is Proprotein convertase subtilisin/kexin type 7 (785 aa).

The N-terminal stretch at 1–37 (MPKGRQKVPHLDAPLGLPTCLWLELAGLFLLVPWVMG) is a signal peptide. Positions 38-141 (LAGTGGPDGQ…EQRLLRRAKR (104 aa)) are excised as a propeptide. The Extracellular segment spans residues 142–667 (SVHFNDPKYP…YTITPNTLKT (526 aa)). Positions 153 to 473 (QWHLNNRRSP…FGLLNAWRLV (321 aa)) constitute a Peptidase S8 domain. Residues Asn-167 and Asn-175 are each glycosylated (N-linked (GlcNAc...) asparagine). Asp-187 acts as the Charge relay system in catalysis. The tract at residues 197–219 (IAPNYSPEGSYDLNSNDPDPMPH) is disordered. His-228 functions as the Charge relay system in the catalytic mechanism. An N-linked (GlcNAc...) asparagine glycan is attached at Asn-241. Ser-406 functions as the Charge relay system in the catalytic mechanism. The 138-residue stretch at 481-618 (SVPYLASYVS…QLTLYGSVWS (138 aa)) folds into the P/Homo B domain. Asn-511 carries an N-linked (GlcNAc...) asparagine glycan. Residues 668–688 (LVLVGCFTVFWTVYYMLEVYL) traverse the membrane as a helical segment. At 689 to 785 (SQRNVASNQV…VPHGKEEQIC (97 aa)) the chain is on the cytoplasmic side. The tract at residues 700-751 (RSGPCHWPHRSRKAKEEGTELESVPLCSSKDPDEVETESRGPPTTSDLLAPD) is disordered.

It belongs to the peptidase S8 family. Requires Ca(2+) as cofactor. Post-translationally, cysteine residues in the cytoplasmic tail are probably palmitoylated. N-glycosylated. As to expression, expressed in spleen, thymus, prostate, testis, ovary, small intestine, colon and peripheral blood leukocyte.

It is found in the golgi apparatus. The protein localises to the trans-Golgi network membrane. With respect to regulation, inhibited by zinc and copper. Its function is as follows. Serine endoprotease that processes various proproteins by cleavage at paired basic amino acids, recognizing the RXXX[KR]R consensus motif. Likely functions in the constitutive secretory pathway. This chain is Proprotein convertase subtilisin/kexin type 7 (PCSK7), found in Homo sapiens (Human).